The sequence spans 255 residues: Diphthine synthase (255 aa).

S-adenosyl-L-methionine-binding positions include Leu9, Asp85, Val88, 113 to 114 (SI), Leu164, Ala207, and His232.

It belongs to the diphthine synthase family. In terms of assembly, homodimer.

It catalyses the reaction 2-[(3S)-amino-3-carboxypropyl]-L-histidyl-[translation elongation factor 2] + 3 S-adenosyl-L-methionine = diphthine-[translation elongation factor 2] + 3 S-adenosyl-L-homocysteine + 3 H(+). It functions in the pathway protein modification; peptidyl-diphthamide biosynthesis. Functionally, S-adenosyl-L-methionine-dependent methyltransferase that catalyzes the trimethylation of the amino group of the modified target histidine residue in translation elongation factor 2 (EF-2), to form an intermediate called diphthine. The three successive methylation reactions represent the second step of diphthamide biosynthesis. The chain is Diphthine synthase from Methanococcus maripaludis (strain C6 / ATCC BAA-1332).